Reading from the N-terminus, the 85-residue chain is RNA-binding protein Hfq (85 aa).

The region spanning 10 to 70 (DIFLNGARKN…ISTINPAKPL (61 aa)) is the Sm domain.

This sequence belongs to the Hfq family. In terms of assembly, homohexamer.

In terms of biological role, RNA chaperone that binds small regulatory RNA (sRNAs) and mRNAs to facilitate mRNA translational regulation in response to envelope stress, environmental stress and changes in metabolite concentrations. Also binds with high specificity to tRNAs. This is RNA-binding protein Hfq from Clostridium botulinum (strain 657 / Type Ba4).